The chain runs to 241 residues: Lactate utilization protein C (241 aa).

Belongs to the LutC/YkgG family.

Functionally, is involved in L-lactate degradation and allows cells to grow with lactate as the sole carbon source. This chain is Lactate utilization protein C, found in Geobacillus sp. (strain WCH70).